The primary structure comprises 353 residues: 3'-5' exonuclease (353 aa).

The tract at residues 1–119 (MEKYLTKMPI…PSPEKEKPEK (119 aa)) is disordered. Composition is skewed to basic and acidic residues over residues 13 to 30 (KANE…ETPK) and 37 to 50 (KKDT…KENA). Positions 59-70 (TKGRPGRPAAKR) are enriched in basic residues. A compositionally biased stretch (basic and acidic residues) spans 71–90 (KNLDTPDVTEKLAMEEENPP). Phosphoserine is present on residues Ser-103, Ser-109, and Ser-111. Positions 145–313 (VLQWVEKQKD…GQVIYRELER (169 aa)) constitute a 3'-5' exonuclease domain. Mg(2+)-binding residues include Asp-162, Glu-164, and Asp-300.

Belongs to the WRNexo family.

The protein resides in the nucleus. Its function is as follows. Has exonuclease activity on both single-stranded and duplex templates bearing overhangs, but not blunt ended duplex DNA, and cleaves in a 3'-5' direction. Essential for the formation of DNA replication focal centers. Has an important role in maintaining genome stability. This chain is 3'-5' exonuclease, found in Drosophila melanogaster (Fruit fly).